Consider the following 176-residue polypeptide: NAD(P)H-quinone oxidoreductase subunit 6, chloroplastic (176 aa).

Helical transmembrane passes span 10 to 30 (ILMLFGGFVLLLGGLGVVLLT), 33 to 53 (IYSAFSLGLVLVCISLFYFLL), 60 to 80 (VAQLLIYVGAINVLIIFAVMF), 95 to 115 (IGDGFTSLVCITIVFSLMTTI), and 152 to 172 (FYLPFELISIILLVSLIGAIT).

Belongs to the complex I subunit 6 family. NDH is composed of at least 16 different subunits, 5 of which are encoded in the nucleus.

It is found in the plastid. It localises to the chloroplast thylakoid membrane. The catalysed reaction is a plastoquinone + NADH + (n+1) H(+)(in) = a plastoquinol + NAD(+) + n H(+)(out). It catalyses the reaction a plastoquinone + NADPH + (n+1) H(+)(in) = a plastoquinol + NADP(+) + n H(+)(out). NDH shuttles electrons from NAD(P)H:plastoquinone, via FMN and iron-sulfur (Fe-S) centers, to quinones in the photosynthetic chain and possibly in a chloroplast respiratory chain. The immediate electron acceptor for the enzyme in this species is believed to be plastoquinone. Couples the redox reaction to proton translocation, and thus conserves the redox energy in a proton gradient. The sequence is that of NAD(P)H-quinone oxidoreductase subunit 6, chloroplastic (ndhG) from Triticum aestivum (Wheat).